A 588-amino-acid chain; its full sequence is Cyclomaltodextrinase (588 aa).

Substrate is bound by residues His247 and Arg326. Asp328 acts as the Nucleophile in catalysis. Glu357 functions as the Proton donor in the catalytic mechanism. Substrate-binding positions include 423–424 (HD), Asp468, and Arg472.

The protein belongs to the glycosyl hydrolase 13 family. As to quaternary structure, exists as a monomer or a homodimer in solution. Homodimer is more active and stable than the monomer.

The enzyme catalyses cyclomaltodextrin + H2O = linear maltodextrin. No metal dependence, but Mn(2+) increases the activity with alpha-cyclodextrin as substrate. No effect on the activity with presence or absence of Ca(2+), Zn(2+), Tween-20 or EDTA. Hydrolyzes alpha-, beta- and gamma-cyclodextrins with the highest activity with alpha-cyclodextrin (cyclomaltohexaose). Pullulan is the preferred substrate from linear substrates. Maltose is a major product of these reactions. Is also able to hydrolyze maltotriose and acarbose, and transglycosylate their hydrolytic products. Major reaction products of maltotriose and of acarbose are maltose and glucose, and glucose and pseudotrisaccharide, respectively. No activity with glucose or maltose as substrate. The polypeptide is Cyclomaltodextrinase (Geobacillus thermopakistaniensis (strain MAS1)).